Here is a 267-residue protein sequence, read N- to C-terminus: Tryptophan synthase alpha chain (267 aa).

Active-site proton acceptor residues include E49 and D60.

The protein belongs to the TrpA family. As to quaternary structure, tetramer of two alpha and two beta chains.

It carries out the reaction (1S,2R)-1-C-(indol-3-yl)glycerol 3-phosphate + L-serine = D-glyceraldehyde 3-phosphate + L-tryptophan + H2O. Its pathway is amino-acid biosynthesis; L-tryptophan biosynthesis; L-tryptophan from chorismate: step 5/5. In terms of biological role, the alpha subunit is responsible for the aldol cleavage of indoleglycerol phosphate to indole and glyceraldehyde 3-phosphate. The protein is Tryptophan synthase alpha chain of Salinispora arenicola (strain CNS-205).